Consider the following 301-residue polypeptide: GPN-loop GTPase 3 (301 aa).

Residue 13 to 18 (GAGKST) participates in GTP binding. A Gly-Pro-Asn (GPN)-loop; involved in dimer interface motif is present at residues 70–72 (GPN). A GTP-binding site is contributed by 176–179 (SKMD). The interval 212 to 232 (IAEGQDAEDDESKAPDEKDQV) is disordered. The segment covering 223–232 (SKAPDEKDQV) has biased composition (basic and acidic residues).

It belongs to the GPN-loop GTPase family. Heterodimers with GPN1 or GPN2. Binds to RNA polymerase II (RNAPII).

In terms of biological role, small GTPase required for proper nuclear import of RNA polymerase II and III (RNAPII and RNAPIII). May act at an RNAP assembly step prior to nuclear import. The sequence is that of GPN-loop GTPase 3 from Gibberella zeae (strain ATCC MYA-4620 / CBS 123657 / FGSC 9075 / NRRL 31084 / PH-1) (Wheat head blight fungus).